The following is a 501-amino-acid chain: GMP synthase [glutamine-hydrolyzing] (501 aa).

In terms of domain architecture, Glutamine amidotransferase type-1 spans 1–185; that stretch reads MVLVVDYGSQ…LFNVCKLEKN (185 aa). The active-site Nucleophile is Cys-75. Catalysis depends on residues His-159 and Glu-161. Positions 186 to 376 constitute a GMPS ATP-PPase domain; the sequence is WKIGDLVEEK…LGIPDRIINR (191 aa). An ATP-binding site is contributed by 213–219; sequence SGGVDSS.

In terms of assembly, homodimer.

It catalyses the reaction XMP + L-glutamine + ATP + H2O = GMP + L-glutamate + AMP + diphosphate + 2 H(+). It participates in purine metabolism; GMP biosynthesis; GMP from XMP (L-Gln route): step 1/1. Its function is as follows. Catalyzes the synthesis of GMP from XMP. The protein is GMP synthase [glutamine-hydrolyzing] (guaA) of Thermotoga maritima (strain ATCC 43589 / DSM 3109 / JCM 10099 / NBRC 100826 / MSB8).